The chain runs to 369 residues: O-methyltransferase 12 (369 aa).

S-adenosyl-L-methionine-binding positions include Gly-181, Asp-204, 229-231 (GDF), Asp-230, Phe-231, and Lys-244. His-248 acts as the Proton acceptor in catalysis.

It belongs to the class I-like SAM-binding methyltransferase superfamily. Cation-independent O-methyltransferase family. COMT subfamily.

It carries out the reaction resorcinol + S-adenosyl-L-methionine = 3-methoxyphenol + S-adenosyl-L-homocysteine + H(+). Its function is as follows. S-adenosyl-L-methionine dependent O-methyltransferase that may be involved in modifying resorcinol ring to synthesize a variant of 4-methyl-5-pentylbenzene-1,3-diol. This Dictyostelium discoideum (Social amoeba) protein is O-methyltransferase 12 (omt12).